A 29-amino-acid polypeptide reads, in one-letter code: NAD-reducing hydrogenase HoxS subunit delta (29 aa).

The span at 1–11 (MKHSEKNEIAS) shows a compositional bias: basic and acidic residues. The interval 1–29 (MKHSEKNEIASHELPTTPLDPVLAAGRES) is disordered.

It belongs to the [NiFe]/[NiFeSe] hydrogenase small subunit family. Tetramer of an alpha and a gamma subunits (flavin-containing dimer), and a delta and a nickel-containing beta subunits (hydrogenase dimer). Requires [4Fe-4S] cluster as cofactor. The cofactor is [3Fe-4S] cluster. It depends on [2Fe-2S] cluster as a cofactor. FMN serves as cofactor. Ni(2+) is required as a cofactor.

The protein localises to the cytoplasm. It catalyses the reaction H2 + NAD(+) = NADH + H(+). This is NAD-reducing hydrogenase HoxS subunit delta (hoxY) from Rhodococcus opacus (Nocardia opaca).